The primary structure comprises 161 residues: Nucleotide-binding protein Nmul_A1044 (161 aa).

It belongs to the YajQ family.

Nucleotide-binding protein. The chain is Nucleotide-binding protein Nmul_A1044 from Nitrosospira multiformis (strain ATCC 25196 / NCIMB 11849 / C 71).